The following is an 887-amino-acid chain: Alanine--tRNA ligase (887 aa).

Residues His-564, His-568, Cys-676, and His-680 each coordinate Zn(2+).

Belongs to the class-II aminoacyl-tRNA synthetase family. Requires Zn(2+) as cofactor.

It is found in the cytoplasm. The enzyme catalyses tRNA(Ala) + L-alanine + ATP = L-alanyl-tRNA(Ala) + AMP + diphosphate. Functionally, catalyzes the attachment of alanine to tRNA(Ala) in a two-step reaction: alanine is first activated by ATP to form Ala-AMP and then transferred to the acceptor end of tRNA(Ala). Also edits incorrectly charged Ser-tRNA(Ala) and Gly-tRNA(Ala) via its editing domain. The sequence is that of Alanine--tRNA ligase from Chelativorans sp. (strain BNC1).